The following is a 129-amino-acid chain: Small ribosomal subunit protein uS11 (129 aa).

Belongs to the universal ribosomal protein uS11 family. Part of the 30S ribosomal subunit. Interacts with proteins S7 and S18. Binds to IF-3.

In terms of biological role, located on the platform of the 30S subunit, it bridges several disparate RNA helices of the 16S rRNA. Forms part of the Shine-Dalgarno cleft in the 70S ribosome. This is Small ribosomal subunit protein uS11 from Nitratidesulfovibrio vulgaris (strain ATCC 29579 / DSM 644 / CCUG 34227 / NCIMB 8303 / VKM B-1760 / Hildenborough) (Desulfovibrio vulgaris).